Reading from the N-terminus, the 732-residue chain is Elongation factor 2 (732 aa).

The region spanning 19-230 is the tr-type G domain; it reads ERIRNMGIAA…VSFKDIVELT (212 aa). Residues 28 to 35, 94 to 98, and 148 to 151 contribute to the GTP site; these read AHIDHGKT, DTPGH, and NKVD. Histidine 597 is subject to Diphthamide.

Belongs to the TRAFAC class translation factor GTPase superfamily. Classic translation factor GTPase family. EF-G/EF-2 subfamily.

The protein localises to the cytoplasm. In terms of biological role, catalyzes the GTP-dependent ribosomal translocation step during translation elongation. During this step, the ribosome changes from the pre-translocational (PRE) to the post-translocational (POST) state as the newly formed A-site-bound peptidyl-tRNA and P-site-bound deacylated tRNA move to the P and E sites, respectively. Catalyzes the coordinated movement of the two tRNA molecules, the mRNA and conformational changes in the ribosome. The chain is Elongation factor 2 from Thermococcus gammatolerans (strain DSM 15229 / JCM 11827 / EJ3).